Consider the following 164-residue polypeptide: 6,7-dimethyl-8-ribityllumazine synthase (164 aa).

5-amino-6-(D-ribitylamino)uracil-binding positions include Phe24, 58–60 (ALE), and 82–84 (AVI). 87–88 (ET) provides a ligand contact to (2S)-2-hydroxy-3-oxobutyl phosphate. Residue His90 is the Proton donor of the active site. Asn115 contributes to the 5-amino-6-(D-ribitylamino)uracil binding site. Arg129 lines the (2S)-2-hydroxy-3-oxobutyl phosphate pocket.

It belongs to the DMRL synthase family.

The enzyme catalyses (2S)-2-hydroxy-3-oxobutyl phosphate + 5-amino-6-(D-ribitylamino)uracil = 6,7-dimethyl-8-(1-D-ribityl)lumazine + phosphate + 2 H2O + H(+). It participates in cofactor biosynthesis; riboflavin biosynthesis; riboflavin from 2-hydroxy-3-oxobutyl phosphate and 5-amino-6-(D-ribitylamino)uracil: step 1/2. Functionally, catalyzes the formation of 6,7-dimethyl-8-ribityllumazine by condensation of 5-amino-6-(D-ribitylamino)uracil with 3,4-dihydroxy-2-butanone 4-phosphate. This is the penultimate step in the biosynthesis of riboflavin. This Ralstonia nicotianae (strain ATCC BAA-1114 / GMI1000) (Ralstonia solanacearum) protein is 6,7-dimethyl-8-ribityllumazine synthase.